We begin with the raw amino-acid sequence, 882 residues long: Alanine--tRNA ligase (882 aa).

Positions 568, 572, 670, and 674 each coordinate Zn(2+).

The protein belongs to the class-II aminoacyl-tRNA synthetase family. The cofactor is Zn(2+).

The protein localises to the cytoplasm. It catalyses the reaction tRNA(Ala) + L-alanine + ATP = L-alanyl-tRNA(Ala) + AMP + diphosphate. In terms of biological role, catalyzes the attachment of alanine to tRNA(Ala) in a two-step reaction: alanine is first activated by ATP to form Ala-AMP and then transferred to the acceptor end of tRNA(Ala). Also edits incorrectly charged Ser-tRNA(Ala) and Gly-tRNA(Ala) via its editing domain. The chain is Alanine--tRNA ligase from Lactobacillus gasseri (strain ATCC 33323 / DSM 20243 / BCRC 14619 / CIP 102991 / JCM 1131 / KCTC 3163 / NCIMB 11718 / NCTC 13722 / AM63).